We begin with the raw amino-acid sequence, 468 residues long: ATP synthase subunit beta (468 aa).

155–162 lines the ATP pocket; sequence GGAGVGKT.

The protein belongs to the ATPase alpha/beta chains family. In terms of assembly, F-type ATPases have 2 components, CF(1) - the catalytic core - and CF(0) - the membrane proton channel. CF(1) has five subunits: alpha(3), beta(3), gamma(1), delta(1), epsilon(1). CF(0) has three main subunits: a(1), b(2) and c(9-12). The alpha and beta chains form an alternating ring which encloses part of the gamma chain. CF(1) is attached to CF(0) by a central stalk formed by the gamma and epsilon chains, while a peripheral stalk is formed by the delta and b chains.

The protein localises to the cell membrane. The catalysed reaction is ATP + H2O + 4 H(+)(in) = ADP + phosphate + 5 H(+)(out). In terms of biological role, produces ATP from ADP in the presence of a proton gradient across the membrane. The catalytic sites are hosted primarily by the beta subunits. The polypeptide is ATP synthase subunit beta (Streptococcus mutans serotype c (strain ATCC 700610 / UA159)).